Here is a 161-residue protein sequence, read N- to C-terminus: Putative allophycocyanin subunit alpha 2 (161 aa).

Asn-71 bears the N4-methylasparagine mark. Cys-81 contributes to the (2R,3E)-phycocyanobilin binding site.

It belongs to the phycobiliprotein family. Heterohexamer of two alpha chains, one alpha-B chain and three beta chains. Contains one covalently linked phycocyanobilin chromophore. The chromophore is added by phycocyanobilin lyase CpcS 1.

The protein localises to the cellular thylakoid membrane. Light-harvesting photosynthetic bile pigment-protein from the phycobiliprotein complex. Allophycocyanin has a maximum absorption at approximately 650 to 653 nanometers. This Nostoc sp. (strain PCC 7120 / SAG 25.82 / UTEX 2576) protein is Putative allophycocyanin subunit alpha 2 (apcA2).